The primary structure comprises 74 residues: ATP synthase subunit 9, mitochondrial (74 aa).

Helical transmembrane passes span 8 to 28 (MGAG…GNVF) and 50 to 70 (ILGF…AFLI).

It belongs to the ATPase C chain family. F-type ATPases have 2 components, CF(1) - the catalytic core - and CF(0) - the membrane proton channel. CF(1) has five subunits: alpha(3), beta(3), gamma(1), delta(1), epsilon(1). CF(0) has three main subunits: a, b and c.

The protein resides in the mitochondrion membrane. Its function is as follows. This protein is one of the chains of the nonenzymatic membrane component (F0) of mitochondrial ATPase. This Solanum lycopersicum (Tomato) protein is ATP synthase subunit 9, mitochondrial (ATP9).